Here is a 410-residue protein sequence, read N- to C-terminus: Tegument protein VP16 homolog (410 aa).

Residues 388-410 form a disordered region; it reads PPSPSEILPGDPPRPPTCGFLTR.

This sequence belongs to the herpesviridae tegument protein VP16 protein family. As to quaternary structure, associates with the VP16-induced complex; binding to host HCFC1 activates VP16 for association with the octamer motif-binding host protein POU2F1, to form a multiprotein-DNA complex responsible for activating transcription of the viral immediate early genes.

Its subcellular location is the virion tegument. The protein resides in the host nucleus. Transcriptional activator of immediate-early (IE) gene products (alpha genes). Acts as a key activator of lytic infection by initiating the lytic program through the assembly of the transcriptional regulatory VP16-induced complex composed of VP16 and two cellular factors, HCFC1 and POU2F1. VP16-induced complex represents a regulatory switch: when it is on, it promotes IE-gene expression and thus lytic infection, and when it is off, it limits IE-gene transcription favoring latent infection. Its function is as follows. May play a role in the aggregation of tegument proteins around nucleocapsids during virus morphogenesis. The sequence is that of Tegument protein VP16 homolog from Varicella-zoster virus (strain Dumas) (HHV-3).